The primary structure comprises 154 residues: Thioredoxin-like protein CXXS2 (154 aa).

In terms of domain architecture, Thioredoxin spans 23–148 (RRNKTQARSQ…LQKKTAAAAN (126 aa)). At Ser31 the chain carries Phosphoserine.

This sequence belongs to the thioredoxin family. As to expression, ubiquitous.

It is found in the cytoplasm. Functionally, possesses low disulfide reductase activity, but efficient protein disulfide isomerase activity. Does not possess deglutathionylation activity. This is Thioredoxin-like protein CXXS2 (CXXS2) from Arabidopsis thaliana (Mouse-ear cress).